The following is an 87-amino-acid chain: Toxin ICK-42 (87 aa).

A signal peptide spans 1–19 (MKPIVYMLLFCAFTVVILG). 4 disulfide bridges follow: C40–C54, C40–C77, C53–C66, and C80–C87.

This sequence belongs to the neurotoxin 27 (Jztx-72) family. ICK-41 subfamily. Expressed by the venom gland.

It localises to the secreted. In terms of biological role, probable neurotoxin with ion channel impairing activity. This chain is Toxin ICK-42, found in Trittame loki (Brush-footed trapdoor spider).